The following is a 281-amino-acid chain: Pantothenate synthetase (281 aa).

30–37 (MGNLHQGH) lines the ATP pocket. The active-site Proton donor is the His37. Residue Gln61 coordinates (R)-pantoate. Gln61 contacts beta-alanine. 149 to 152 (GRKD) provides a ligand contact to ATP. Gln155 is a (R)-pantoate binding site. ATP is bound by residues Ile178 and 186 to 189 (MSSR).

It belongs to the pantothenate synthetase family. As to quaternary structure, homodimer.

The protein resides in the cytoplasm. It catalyses the reaction (R)-pantoate + beta-alanine + ATP = (R)-pantothenate + AMP + diphosphate + H(+). Its pathway is cofactor biosynthesis; (R)-pantothenate biosynthesis; (R)-pantothenate from (R)-pantoate and beta-alanine: step 1/1. Its function is as follows. Catalyzes the condensation of pantoate with beta-alanine in an ATP-dependent reaction via a pantoyl-adenylate intermediate. This is Pantothenate synthetase from Shewanella denitrificans (strain OS217 / ATCC BAA-1090 / DSM 15013).